A 520-amino-acid chain; its full sequence is MATKLLALSLSFCFLLLGGCFALREQPEQNECQLERLNALEPDNRIESEGGLIETWNPNNKQFRCAGVALSRATLQHNALRRPYYSNAPQEIFIQQGNGYFGMVFPGCPETFEEPQESEQGEGRRYRDRHQKVNRFREGDIIAVPTGIVFWMYNDQDTPVIAVSLTDIRSSNNQLDQMPRRFYLAGNHEQEFLRYQHQQGGKQEQENEGNNIFSGFKRDFLEDAFNVNRHIVDRLQGRNEDEEKGAIVKVKGGLSIISPPEKQARHQRGSRQEEDEDEDEERQPRHQRGSRQEEEEDEDEERQPRHQRRRGEEEEEDKKERRGSQKGKSRRQGDNGLEETVCTAKLRLNIGPSSSPDIYNPEAGRIKTVTSLDLPVLRWLKLSAEHGSLHKNAMFVPHYNLNANSIIYALKGRARLQVVNCNGNTVFDGELEAGRALTVPQNYAVAAKSLSDRFSYVAFKTNDRAGIARLAGTSSVINNLPLDVVAATFNLQRNEARQLKSNNPFKFLVPARQSENRASA.

Residues 1–22 (MATKLLALSLSFCFLLLGGCFA) form the signal peptide. 2 cysteine pairs are disulfide-bonded: Cys32/Cys65 and Cys108/Cys342. Residues 37-233 (LNALEPDNRI…AFNVNRHIVD (197 aa)) enclose the Cupin type-1 1 domain. The interval 250 to 339 (VKGGLSIISP…RRQGDNGLEE (90 aa)) is disordered. Residues 348–497 (LNIGPSSSPD…TFNLQRNEAR (150 aa)) form the Cupin type-1 2 domain.

It belongs to the 11S seed storage protein (globulins) family. Hexamer; each subunit is composed of an acidic and a basic chain derived from a single precursor and linked by a disulfide bond.

This protein found in the seeds of many leguminous and non-leguminous plants is the source of sulfur-containing amino acids in seed meals. The protein is Legumin A2 (LEGA2) of Pisum sativum (Garden pea).